Here is a 428-residue protein sequence, read N- to C-terminus: Glutamate-1-semialdehyde 2,1-aminomutase (428 aa).

Lys-265 is subject to N6-(pyridoxal phosphate)lysine.

It belongs to the class-III pyridoxal-phosphate-dependent aminotransferase family. HemL subfamily. As to quaternary structure, homodimer. It depends on pyridoxal 5'-phosphate as a cofactor.

The protein resides in the cytoplasm. The enzyme catalyses (S)-4-amino-5-oxopentanoate = 5-aminolevulinate. Its pathway is porphyrin-containing compound metabolism; protoporphyrin-IX biosynthesis; 5-aminolevulinate from L-glutamyl-tRNA(Glu): step 2/2. This is Glutamate-1-semialdehyde 2,1-aminomutase from Shewanella frigidimarina (strain NCIMB 400).